The primary structure comprises 118 residues: Small ribosomal subunit protein uS13 (118 aa).

A disordered region spans residues 99-118 (GQRTRTNARTRKGPRKAIKK).

Belongs to the universal ribosomal protein uS13 family. In terms of assembly, part of the 30S ribosomal subunit. Forms a loose heterodimer with protein S19. Forms two bridges to the 50S subunit in the 70S ribosome.

In terms of biological role, located at the top of the head of the 30S subunit, it contacts several helices of the 16S rRNA. In the 70S ribosome it contacts the 23S rRNA (bridge B1a) and protein L5 of the 50S subunit (bridge B1b), connecting the 2 subunits; these bridges are implicated in subunit movement. Contacts the tRNAs in the A and P-sites. This chain is Small ribosomal subunit protein uS13, found in Xylella fastidiosa (strain M23).